The chain runs to 341 residues: DNA-directed RNA polymerase subunit alpha (341 aa).

An alpha N-terminal domain (alpha-NTD) region spans residues 1-226; the sequence is MLIAQRPTIT…ELFGLVRELN (226 aa). The interval 241-341 is alpha C-terminal domain (alpha-CTD); the sequence is AALAADLALP…DQRYIETEQL (101 aa).

It belongs to the RNA polymerase alpha chain family. Homodimer. The RNAP catalytic core consists of 2 alpha, 1 beta, 1 beta' and 1 omega subunit. When a sigma factor is associated with the core the holoenzyme is formed, which can initiate transcription.

The enzyme catalyses RNA(n) + a ribonucleoside 5'-triphosphate = RNA(n+1) + diphosphate. DNA-dependent RNA polymerase catalyzes the transcription of DNA into RNA using the four ribonucleoside triphosphates as substrates. In Acidothermus cellulolyticus (strain ATCC 43068 / DSM 8971 / 11B), this protein is DNA-directed RNA polymerase subunit alpha.